The primary structure comprises 123 residues: Small ribosomal subunit protein uS12 (123 aa).

At D89 the chain carries 3-methylthioaspartic acid. Positions T104 to K123 are disordered. Over residues R110–K123 the composition is skewed to basic residues.

This sequence belongs to the universal ribosomal protein uS12 family. Part of the 30S ribosomal subunit. Contacts proteins S8 and S17. May interact with IF1 in the 30S initiation complex.

In terms of biological role, with S4 and S5 plays an important role in translational accuracy. Functionally, interacts with and stabilizes bases of the 16S rRNA that are involved in tRNA selection in the A site and with the mRNA backbone. Located at the interface of the 30S and 50S subunits, it traverses the body of the 30S subunit contacting proteins on the other side and probably holding the rRNA structure together. The combined cluster of proteins S8, S12 and S17 appears to hold together the shoulder and platform of the 30S subunit. The sequence is that of Small ribosomal subunit protein uS12 from Rhodospirillum rubrum (strain ATCC 11170 / ATH 1.1.1 / DSM 467 / LMG 4362 / NCIMB 8255 / S1).